Here is a 120-residue protein sequence, read N- to C-terminus: Chemokine vCXCL1 (120 aa).

This sequence belongs to the intercrine alpha (chemokine CxC) family. Interacts with host CXCR1 and CXCR2.

Its function is as follows. Acts as a functional chemokine, inducing calcium mobilization, chemotaxis, and degranulation of neutrophils. Contributes to the induction of neutrophil chemotaxis by interacting with host CXCR1 and CXCR2 receptors. The chain is Chemokine vCXCL1 (UL146) from Human cytomegalovirus (strain Merlin) (HHV-5).